The chain runs to 750 residues: Neprilysin (750 aa).

A lipid anchor (N-myristoyl glycine) is attached at G2. The Cytoplasmic segment spans residues 2–28 (GRSESQMDITDINAPKPKKKQRWTPLE). Phosphoserine is present on residues S4 and S6. A Stop-transfer sequence motif is present at residues 16–23 (PKPKKKQR). A helical; Signal-anchor for type II membrane protein transmembrane segment spans residues 29–51 (ISLSVLVLLLTIIAVTMIALYAT). Over 52 to 750 (YDDGICKSSD…MNPERKCRVW (699 aa)) the chain is Extracellular. The region spanning 56 to 750 (ICKSSDCIKS…MNPERKCRVW (695 aa)) is the Peptidase M13 domain. 6 cysteine pairs are disulfide-bonded: C57–C62, C80–C735, C88–C695, C143–C411, C234–C242, and C621–C747. Residue R103 participates in a peptide binding. N145 and N211 each carry an N-linked (GlcNAc...) asparagine glycan. N-linked (GlcNAc...) asparagine glycosylation is found at N285, N311, and N325. Zn(2+) is bound at residue H584. The active site involves E585. Position 588 (H588) interacts with Zn(2+). N628 carries N-linked (GlcNAc...) asparagine glycosylation. Residue E647 participates in Zn(2+) binding. The Proton donor role is filled by D651.

The protein belongs to the peptidase M13 family. Zn(2+) is required as a cofactor. Myristoylation is a determinant of membrane targeting. Post-translationally, glycosylation at Asn-628 is necessary both for surface expression and neutral endopeptidase activity.

It is found in the cell membrane. The enzyme catalyses Preferential cleavage of polypeptides between hydrophobic residues, particularly with Phe or Tyr at P1'.. It catalyses the reaction substance P + H2O = substance P(1-9) + L-Leu-L-Met-NH2. The catalysed reaction is substance P + H2O = substance P(1-7) + L-Phe-Gly-L-Leu-L-Met-NH2. It carries out the reaction neurotensin + H2O = neurotensin(1-11) + L-isoleucyl-L-leucine. The enzyme catalyses neurotensin + H2O = neurotensin(1-10) + L-tyrosyl-L-isoleucyl-L-leucine. Its function is as follows. Thermolysin-like specificity, but is almost confined on acting on polypeptides of up to 30 amino acids. Biologically important in the destruction of opioid peptides such as Met- and Leu-enkephalins by cleavage of a Gly-Phe bond. Catalyzes cleavage of bradykinin, substance P and neurotensin peptides. Able to cleave angiotensin-1, angiotensin-2 and angiotensin 1-9. Involved in the degradation of the atrial natriuretic factor (ANF). Displays UV-inducible elastase activity toward skin preelastic and elastic fibers. The sequence is that of Neprilysin from Mus musculus (Mouse).